We begin with the raw amino-acid sequence, 790 residues long: Cadherin-6 (790 aa).

The signal sequence occupies residues 1–30 (MRTYHCFWLLFWAGQPHQSFLTLLSKRTSG). Positions 31 to 53 (FPEKEKVLVLSGNSRRDLSRSKR) are excised as a propeptide. 5 consecutive Cadherin domains span residues 54–159 (SWMW…EPMF), 160–268 (TKDV…PPRF), 269–383 (PQST…PPVF), 384–486 (SRPA…DNAP), and 487–608 (EFAM…LIHP). The Extracellular segment spans residues 54–615 (SWMWNQFFLL…IHPTGLSTGA (562 aa)). N-linked (GlcNAc...) asparagine glycosylation is found at N165 and N255. Positions 261–289 (VNDNPPRFPQSTYQFRAPESTPPDSPIGR) are disordered. 3 N-linked (GlcNAc...) asparagine glycosylation sites follow: N437, N455, and N536. Residues 616 to 636 (LIAILLCIIILLVTVVLFAAL) traverse the membrane as a helical segment. Over 637-790 (RRQRKKEPLI…YGSMDSDKDS (154 aa)) the chain is Cytoplasmic.

The protein resides in the cell membrane. In terms of biological role, cadherins are calcium-dependent cell adhesion proteins. They preferentially interact with themselves in a homophilic manner in connecting cells; cadherins may thus contribute to the sorting of heterogeneous cell types. The sequence is that of Cadherin-6 (CDH6) from Gallus gallus (Chicken).